The primary structure comprises 187 residues: Elongation factor P (187 aa).

This sequence belongs to the elongation factor P family.

The protein resides in the cytoplasm. It participates in protein biosynthesis; polypeptide chain elongation. Involved in peptide bond synthesis. Stimulates efficient translation and peptide-bond synthesis on native or reconstituted 70S ribosomes in vitro. Probably functions indirectly by altering the affinity of the ribosome for aminoacyl-tRNA, thus increasing their reactivity as acceptors for peptidyl transferase. In Tolumonas auensis (strain DSM 9187 / NBRC 110442 / TA 4), this protein is Elongation factor P.